A 163-amino-acid chain; its full sequence is Adenosine 5'-monophosphoramidase HINT2 (163 aa).

The transit peptide at 1–17 (MAAAVVLAAGLRAARRA) directs the protein to the mitochondrion. An HIT domain is found at 55–163 (IFSRILDKSL…GGRQLQWPPG (109 aa)). Ser63 and Asp80 together coordinate AMP. N6-acetyllysine is present on Lys119. Asn136 lines the AMP pocket. Position 139 is an N6-acetyllysine (Lys139). Residues 142–145 (AQSV) and 149–151 (HIH) contribute to the AMP site. The Histidine triad motif signature appears at 147 to 151 (HLHIH). His149 acts as the Tele-AMP-histidine intermediate in catalysis.

Belongs to the HINT family. High expression in liver and pancreas. Expression is significantly down-regulated in hepatocellular carcinoma (HCC) patients.

The protein resides in the mitochondrion. The catalysed reaction is adenosine 5'-phosphoramidate + H2O = AMP + NH4(+). Functionally, exhibits adenosine 5'-monophosphoramidase activity, hydrolyzing purine nucleotide phosphoramidates with a single phosphate group such as adenosine 5'monophosphoramidate (AMP-NH2) to yield AMP and NH2. Hydrolyzes adenosine 5'-O-p-nitrophenylphosphoramidate (AMP-pNA). Hydrolyzes fluorogenic purine nucleoside tryptamine phosphoramidates in vitro. May be involved in steroid biosynthesis. May play a role in apoptosis. This chain is Adenosine 5'-monophosphoramidase HINT2, found in Homo sapiens (Human).